We begin with the raw amino-acid sequence, 621 residues long: pH-response transcription factor pacc-1 (621 aa).

Over residues 1–14 (MSSTPAQENGTVNG) the composition is skewed to polar residues. Residues 1-87 (MSSTPAQENG…PTTASNSSAP (87 aa)) form a disordered region. Low complexity predominate over residues 15 to 87 (ANAAPAPAPA…PTTASNSSAP (73 aa)). 3 C2H2-type zinc fingers span residues 95–120 (LVCRWAECNERFTSAEVLYEHICEKH), 131–155 (LTCQWNSCRTTTVKRDHITSHVRVH), and 161–183 (HKCDFCGKCFKRPQDLKKHVKTH). Disordered stretches follow at residues 395–539 (PTYA…PETY) and 566–621 (DEDD…PRIN). Composition is skewed to low complexity over residues 409–423 (ASLASPLSATSPHSA) and 436–465 (SYTSGHSPSTSSTSLSPTSRHSSTPSVSYP). The YPX[LI] motif 1 signature appears at 464–467 (YPTL). Over residues 476–486 (PSTSGLGSNFT) the composition is skewed to polar residues. A compositionally biased stretch (basic and acidic residues) spans 502-511 (RAADEADRAP). Residues 515 to 525 (ASEQATVSSPS) show a composition bias toward polar residues. Residues 583-595 (RNQQQRNQQQQQQ) are compositionally biased toward low complexity. The YPX[LI] motif 2 signature appears at 614–617 (YPVL).

Belongs to the pacC/RIM101 family. As to quaternary structure, binds to DNA. Interacts with palA/prr-1, which binds to the two YPX[LI] motifs and is required for proteolytic processing. Post-translationally, activated by C-terminal proteolytic cleavage by signaling protease (probably palB/RIM13) at neutral to alkaline ambient pH.

The protein localises to the cytoplasm. It localises to the nucleus. Its function is as follows. Transcription factor that mediates regulation of both acid- and alkaline-expressed genes in response to ambient pH. At alkaline ambient pH, activates transcription of alkaline-expressed genes (including pacc-1 itself) and represses transcription of acid-expressed genes. The chain is pH-response transcription factor pacc-1 (pacc-1) from Neurospora crassa (strain ATCC 24698 / 74-OR23-1A / CBS 708.71 / DSM 1257 / FGSC 987).